The primary structure comprises 302 residues: Genetic interactor of prohibitin 7, mitochondrial (302 aa).

The transit peptide at 1-21 (MLSQYLRKHHLLSRRHQFMRC) directs the protein to the mitochondrion. Residues 20–44 (RCASQSRSPPRSLLQRQAKRRGEAE) are disordered. Residues 236-253 (GTRIIAWLGILIVMIASV) form a helical membrane-spanning segment. The disordered stretch occupies residues 264 to 290 (ATVKVSEFTEQETSEPQAAQQDTAPIS). Residues 277–290 (SEPQAAQQDTAPIS) are compositionally biased toward polar residues.

It belongs to the GEP7 family.

It localises to the mitochondrion membrane. Its function is as follows. Involved in respiratory growth and required for cell survival in the absence of prohibitins. In Lachancea thermotolerans (strain ATCC 56472 / CBS 6340 / NRRL Y-8284) (Yeast), this protein is Genetic interactor of prohibitin 7, mitochondrial (GEP7).